The chain runs to 63 residues: Large ribosomal subunit protein bL28 (63 aa).

The protein belongs to the bacterial ribosomal protein bL28 family.

This chain is Large ribosomal subunit protein bL28, found in Geobacter sulfurreducens (strain ATCC 51573 / DSM 12127 / PCA).